The following is a 116-amino-acid chain: Tyrosine-protein phosphatase 14 (116 aa).

In terms of domain architecture, Tyrosine-protein phosphatase spans 1–116 (WRMITQEKAQ…SLKNPGPVIV (116 aa)). Aspartate 84 is a binding site for substrate.

The protein belongs to the protein-tyrosine phosphatase family.

It catalyses the reaction O-phospho-L-tyrosyl-[protein] + H2O = L-tyrosyl-[protein] + phosphate. This chain is Tyrosine-protein phosphatase 14 (STY-14), found in Styela plicata (Wrinkled sea squirt).